The primary structure comprises 308 residues: Probable GTP 3',8-cyclase (308 aa).

Positions 4 to 224 constitute a Radical SAM core domain; it reads RFGRPLEDLR…QIRKKHFRPR (221 aa). Position 13 (Arg-13) interacts with GTP. Residues Cys-20, Cys-24, and Cys-27 each coordinate [4Fe-4S] cluster. A GTP-binding site is contributed by Lys-60. S-adenosyl-L-methionine is bound at residue Gly-64. GTP is bound at residue Thr-90. An S-adenosyl-L-methionine-binding site is contributed by Ser-114. Lys-151 provides a ligand contact to GTP. The [4Fe-4S] cluster site is built by Cys-245 and Cys-248. 250–252 contacts GTP; sequence RIR. Cys-262 provides a ligand contact to [4Fe-4S] cluster.

It belongs to the radical SAM superfamily. MoaA family. Requires [4Fe-4S] cluster as cofactor.

The enzyme catalyses GTP + AH2 + S-adenosyl-L-methionine = (8S)-3',8-cyclo-7,8-dihydroguanosine 5'-triphosphate + 5'-deoxyadenosine + L-methionine + A + H(+). Its pathway is cofactor biosynthesis; molybdopterin biosynthesis. Functionally, catalyzes the cyclization of GTP to (8S)-3',8-cyclo-7,8-dihydroguanosine 5'-triphosphate. In Saccharolobus islandicus (strain L.S.2.15 / Lassen #1) (Sulfolobus islandicus), this protein is Probable GTP 3',8-cyclase.